The primary structure comprises 126 residues: Histone H2B-alpha (126 aa).

The tract at residues 1–34 (MSAAEKKPASKAPAGKAPRDTMKSADKKRGKNRK) is disordered. N6-acetyllysine; alternate occurs at positions 6 and 7. Glycyl lysine isopeptide (Lys-Gly) (interchain with G-Cter in SUMO); alternate cross-links involve residues K6 and K7. At S10 the chain carries Phosphoserine. K11 carries the N6-acetyllysine modification. The segment covering 17 to 27 (APRDTMKSADK) has biased composition (basic and acidic residues). K120 is covalently cross-linked (Glycyl lysine isopeptide (Lys-Gly) (interchain with G-Cter in ubiquitin)).

The protein belongs to the histone H2B family. In terms of assembly, the nucleosome is a histone octamer containing two molecules each of H2A, H2B, H3 and H4 assembled in one H3-H4 heterotetramer and two H2A-H2B heterodimers. The octamer wraps approximately 147 bp of DNA. Interacts with rik1. Monoubiquitinated by the rhp6/ubc2-bre1 complex to form H2BK123ub1. H2BK123ub1 gives a specific tag for epigenetic transcriptional activation and is also prerequisite for H3K4me and H3K79me formation. H2BK123ub1 also modulates the formation of double-strand breaks during meiosis and is a prerequisite for DNA-damage checkpoint activation. Post-translationally, phosphorylated by shk1 to form H2BS10ph during progression through meiotic prophase. May be correlated with chromosome condensation. In terms of processing, acetylation of N-terminal lysines and particularly formation of H2BK11ac has a positive effect on transcription. Sumoylation to form H2BK6su or H2BK7su occurs preferentially near the telomeres and represses gene transcription.

Its subcellular location is the nucleus. It localises to the chromosome. Core component of nucleosome. Nucleosomes wrap and compact DNA into chromatin, limiting DNA accessibility to the cellular machineries which require DNA as a template. Histones thereby play a central role in transcription regulation, DNA repair, DNA replication and chromosomal stability. DNA accessibility is regulated via a complex set of post-translational modifications of histones, also called histone code, and nucleosome remodeling. This Schizosaccharomyces pombe (strain 972 / ATCC 24843) (Fission yeast) protein is Histone H2B-alpha (htb1).